The chain runs to 334 residues: N-acetyl-gamma-glutamyl-phosphate reductase (334 aa).

Cys-154 is a catalytic residue.

It belongs to the NAGSA dehydrogenase family. Type 1 subfamily.

It is found in the cytoplasm. It carries out the reaction N-acetyl-L-glutamate 5-semialdehyde + phosphate + NADP(+) = N-acetyl-L-glutamyl 5-phosphate + NADPH + H(+). It functions in the pathway amino-acid biosynthesis; L-arginine biosynthesis; N(2)-acetyl-L-ornithine from L-glutamate: step 3/4. In terms of biological role, catalyzes the NADPH-dependent reduction of N-acetyl-5-glutamyl phosphate to yield N-acetyl-L-glutamate 5-semialdehyde. The sequence is that of N-acetyl-gamma-glutamyl-phosphate reductase from Pectobacterium carotovorum subsp. carotovorum (strain PC1).